A 447-amino-acid chain; its full sequence is Tubulin beta-4 chain (447 aa).

Positions 11, 69, 138, 142, 143, 144, 204, and 226 each coordinate GTP. Glu69 contributes to the Mg(2+) binding site. The segment at 423 to 447 (QQYQDATADEEGEYEDEEQQEADDM) is disordered. Positions 429–447 (TADEEGEYEDEEQQEADDM) are enriched in acidic residues.

Belongs to the tubulin family. In terms of assembly, dimer of alpha and beta chains. A typical microtubule is a hollow water-filled tube with an outer diameter of 25 nm and an inner diameter of 15 nM. Alpha-beta heterodimers associate head-to-tail to form protofilaments running lengthwise along the microtubule wall with the beta-tubulin subunit facing the microtubule plus end conferring a structural polarity. Microtubules usually have 13 protofilaments but different protofilament numbers can be found in some organisms and specialized cells. Mg(2+) is required as a cofactor. In terms of tissue distribution, expressed in roots and leaf sheaths.

It localises to the cytoplasm. The protein localises to the cytoskeleton. Its function is as follows. Tubulin is the major constituent of microtubules, a cylinder consisting of laterally associated linear protofilaments composed of alpha- and beta-tubulin heterodimers. Microtubules grow by the addition of GTP-tubulin dimers to the microtubule end, where a stabilizing cap forms. Below the cap, tubulin dimers are in GDP-bound state, owing to GTPase activity of alpha-tubulin. In Oryza sativa subsp. japonica (Rice), this protein is Tubulin beta-4 chain (TUBB4).